The primary structure comprises 2179 residues: FRAS1-related extracellular matrix protein 1 (2179 aa).

An N-terminal signal peptide occupies residues 1–21 (MNSLSWGAANAVLLLLLLAWA). The Cell attachment site motif lies at 199–201 (RGD). CSPG repeat units follow at residues 296-390 (KAAF…LEVY), 413-500 (APRV…FRIF), and 521-615 (PPFL…FVLW). N-linked (GlcNAc...) asparagine glycosylation occurs at N335. 2 N-linked (GlcNAc...) asparagine glycosylation sites follow: N560 and N622. CSPG repeat units lie at residues 642 to 754 (KEAP…FSVS), 776 to 867 (QVPE…LEVT), and 887 to 982 (EPPV…LVVS). N1014 is a glycosylation site (N-linked (GlcNAc...) asparagine). CSPG repeat units lie at residues 1024–1126 (PPSI…VYVT), 1147–1254 (EAPD…IQLS), 1275–1372 (KPML…FYLW), 1393–1485 (GDIV…FIIS), 1506–1596 (LPVV…FMAT), and 1628–1724 (PRIT…FQIM). N1566 is a glycosylation site (N-linked (GlcNAc...) asparagine). One can recognise a Calx-beta domain in the interval 1731–1830 (ATPQILELKW…DDEVFEVILN (100 aa)). A Cell attachment site motif is present at residues 1907 to 1909 (RGD). Residues 2060 to 2174 (HSGYCHILIT…CRRAKPHNYV (115 aa)) form the C-type lectin domain. A disulfide bond links C2151 and C2165.

The protein belongs to the FRAS1 family. As to quaternary structure, interacts with FREM2.

The protein localises to the secreted. It localises to the extracellular space. The protein resides in the extracellular matrix. It is found in the basement membrane. Its function is as follows. Extracellular matrix protein that plays a role in epidermal differentiation and is required for epidermal adhesion during embryonic development. The polypeptide is FRAS1-related extracellular matrix protein 1 (Homo sapiens (Human)).